The following is a 393-amino-acid chain: Protein TsgA homolog (393 aa).

Transmembrane regions (helical) follow at residues 11–31 (WISF…GMVM), 51–71 (FLNA…EIIP), 78–98 (FGFV…SLAL), 101–121 (AAMF…TFLI), 134–154 (LLFT…VAAY), 162–182 (WYWV…LTFG), 206–226 (IGVL…LGFI), 245–265 (TLVS…SFIL), 273–293 (ILTV…KAQP), 297–317 (AWFI…IITL), 332–352 (FVLT…GPIV), and 361–381 (LLTA…LGFV).

This sequence belongs to the major facilitator superfamily. TsgA family.

It localises to the cell inner membrane. The protein is Protein TsgA homolog of Citrobacter koseri (strain ATCC BAA-895 / CDC 4225-83 / SGSC4696).